Here is a 382-residue protein sequence, read N- to C-terminus: Caspase-1-B (382 aa).

Residues 1–98 (MTAQLNKVRK…HEHAPSPIQE (98 aa)) constitute a propeptide that is removed on maturation. Active-site residues include histidine 216 and cysteine 270. The propeptide occupies 283-292 (DVAPAPLEDD).

The protein belongs to the peptidase C14A family. In terms of assembly, heterotetramer that consists of two anti-parallel arranged heterodimers, each one formed by a 20 kDa (Caspase-1 subunit p20) and a 10 kDa (Caspase-1 subunit p10) subunit. As to quaternary structure, heterotetramer that consists of two anti-parallel arranged heterodimers, each one formed by a 20 kDa (Caspase-1 subunit p20) and a 10 kDa (Caspase-1 subunit p10) subunit. Can form a heterodimer with isoform epsilon which then has an inhibitory effect. In terms of processing, the two subunits are derived from the precursor sequence by an autocatalytic mechanism.

It is found in the cytoplasm. The protein resides in the cell membrane. It carries out the reaction Strict requirement for an Asp residue at position P1 and has a preferred cleavage sequence of Tyr-Val-Ala-Asp-|-.. Functionally, thiol protease involved in a variety of inflammatory processes by proteolytically cleaving other proteins, such as the precursors of the inflammatory cytokines interleukin-1 beta (IL1B) and interleukin 18 (IL18) as well as the pyroptosis inducer Gasdermin-D (GSDMD), into active mature peptides. Plays a key role in cell immunity as an inflammatory response initiator: once activated through formation of an inflammasome complex, it initiates a pro-inflammatory response through the cleavage of the two inflammatory cytokines IL1B and IL18, releasing the mature cytokines which are involved in a variety of inflammatory processes. Cleaves a tetrapeptide after an Asp residue at position P1. Also initiates pyroptosis, a programmed lytic cell death pathway, through cleavage of GSDMD. The sequence is that of Caspase-1-B (casp1-b) from Xenopus laevis (African clawed frog).